Here is a 258-residue protein sequence, read N- to C-terminus: Cell division protein ZapD (258 aa).

Belongs to the ZapD family. In terms of assembly, interacts with FtsZ.

It is found in the cytoplasm. In terms of biological role, cell division factor that enhances FtsZ-ring assembly. Directly interacts with FtsZ and promotes bundling of FtsZ protofilaments, with a reduction in FtsZ GTPase activity. The polypeptide is Cell division protein ZapD (Coxiella burnetii (strain RSA 331 / Henzerling II)).